Reading from the N-terminus, the 995-residue chain is Protein translocase subunit SecA (995 aa).

Residues Gln-86, 104 to 108 (GEGKT), and Asp-535 each bind ATP. The segment at 883-911 (AQTVSSDGNGEVVRKPQRRSTPQIGRNEL) is disordered. The Zn(2+) site is built by Cys-912, Cys-914, Cys-923, and His-924. Residues 939–995 (PSAPPASKALKSTPATQTAVAEEAAKIQAAINSGKLPPTQTTPRGRQAPSVPRGKKR) are disordered. Over residues 957–969 (AVAEEAAKIQAAI) the composition is skewed to low complexity.

It belongs to the SecA family. As to quaternary structure, monomer and homodimer. Part of the essential Sec protein translocation apparatus which comprises SecA, SecYEG and auxiliary proteins SecDF. Other proteins may also be involved. Zn(2+) is required as a cofactor.

Its subcellular location is the cell membrane. The protein resides in the cytoplasm. It catalyses the reaction ATP + H2O + cellular proteinSide 1 = ADP + phosphate + cellular proteinSide 2.. Functionally, part of the Sec protein translocase complex. Interacts with the SecYEG preprotein conducting channel. Has a central role in coupling the hydrolysis of ATP to the transfer of proteins into and across the cell membrane, serving as an ATP-driven molecular motor driving the stepwise translocation of polypeptide chains across the membrane. The chain is Protein translocase subunit SecA from Chloroflexus aurantiacus (strain ATCC 29366 / DSM 635 / J-10-fl).